Here is a 446-residue protein sequence, read N- to C-terminus: Bifunctional protein GlmU (446 aa).

The pyrophosphorylase stretch occupies residues 1–228 (MTKTAAVILA…AEELLGVNSR (228 aa)). Residues 9-12 (LAAG), Lys-23, Gln-72, 77-78 (GT), 100-102 (YGD), Gly-140, Glu-154, Asn-169, and Asn-226 contribute to the UDP-N-acetyl-alpha-D-glucosamine site. Position 102 (Asp-102) interacts with Mg(2+). Mg(2+) is bound at residue Asn-226. Residues 229 to 249 (SELAAAEAVIQGRLREKAMEG) form a linker region. Residues 250–446 (GATLTAPETV…AHMRRLTGKN (197 aa)) are N-acetyltransferase. UDP-N-acetyl-alpha-D-glucosamine is bound by residues Arg-315 and Lys-333. The active-site Proton acceptor is His-345. UDP-N-acetyl-alpha-D-glucosamine is bound by residues Tyr-348 and Asn-359. Acetyl-CoA contacts are provided by residues Ala-362, 368–369 (NY), Ser-387, Ala-405, and Arg-422.

This sequence in the N-terminal section; belongs to the N-acetylglucosamine-1-phosphate uridyltransferase family. It in the C-terminal section; belongs to the transferase hexapeptide repeat family. In terms of assembly, homotrimer. Mg(2+) serves as cofactor.

The protein localises to the cytoplasm. It catalyses the reaction alpha-D-glucosamine 1-phosphate + acetyl-CoA = N-acetyl-alpha-D-glucosamine 1-phosphate + CoA + H(+). The enzyme catalyses N-acetyl-alpha-D-glucosamine 1-phosphate + UTP + H(+) = UDP-N-acetyl-alpha-D-glucosamine + diphosphate. Its pathway is nucleotide-sugar biosynthesis; UDP-N-acetyl-alpha-D-glucosamine biosynthesis; N-acetyl-alpha-D-glucosamine 1-phosphate from alpha-D-glucosamine 6-phosphate (route II): step 2/2. It participates in nucleotide-sugar biosynthesis; UDP-N-acetyl-alpha-D-glucosamine biosynthesis; UDP-N-acetyl-alpha-D-glucosamine from N-acetyl-alpha-D-glucosamine 1-phosphate: step 1/1. The protein operates within bacterial outer membrane biogenesis; LPS lipid A biosynthesis. In terms of biological role, catalyzes the last two sequential reactions in the de novo biosynthetic pathway for UDP-N-acetylglucosamine (UDP-GlcNAc). The C-terminal domain catalyzes the transfer of acetyl group from acetyl coenzyme A to glucosamine-1-phosphate (GlcN-1-P) to produce N-acetylglucosamine-1-phosphate (GlcNAc-1-P), which is converted into UDP-GlcNAc by the transfer of uridine 5-monophosphate (from uridine 5-triphosphate), a reaction catalyzed by the N-terminal domain. This is Bifunctional protein GlmU from Rhodospirillum rubrum (strain ATCC 11170 / ATH 1.1.1 / DSM 467 / LMG 4362 / NCIMB 8255 / S1).